Consider the following 216-residue polypeptide: Fucoxanthin-chlorophyll a-c binding protein C, chloroplastic (216 aa).

A chloroplast-targeting transit peptide spans 1-38; it reads MKSAIMAVASAAPGLRGPSAFNGAALTTSAKSSSAMKM. Transmembrane regions (helical) follow at residues 80–100, 121–141, and 182–202; these read IAMLAIAGHLTQQNARLPGML, IPPGGLAQIFGFIGFLELAVM, and GRAAQMGILALMVHEELNNKP.

This sequence belongs to the fucoxanthin chlorophyll protein family. In terms of assembly, the LHC complex of chromophytic algae is composed of fucoxanthin, chlorophyll A and C bound non-covalently by fucoxanthin chlorophyll proteins (FCPs). The ratio of pigments in this LHC is; fucoxanthin: chlorophyll C: chlorophyll A; (0.6-1): (0.1-0.3): (1).

It localises to the plastid. The protein localises to the chloroplast thylakoid membrane. In terms of biological role, the light-harvesting complex (LHC) functions as a light receptor, it captures and delivers excitation energy to photosystems with which it is closely associated. Energy is transferred from the carotenoid and chlorophyll C (or B) to chlorophyll A and the photosynthetic reaction centers where it is used to synthesize ATP and reducing power. The sequence is that of Fucoxanthin-chlorophyll a-c binding protein C, chloroplastic (FCPC) from Macrocystis pyrifera (Giant kelp).